We begin with the raw amino-acid sequence, 209 residues long: Redox-sensing transcriptional repressor Rex (209 aa).

The H-T-H motif DNA-binding region spans 16–55; the sequence is LYYRFIQNLSLSGKQRVSSAELSEAVKVDSATIRRDFSYF. An NAD(+)-binding site is contributed by 90 to 95; the sequence is GVGNLG.

Belongs to the transcriptional regulatory Rex family. In terms of assembly, homodimer.

The protein resides in the cytoplasm. Modulates transcription in response to changes in cellular NADH/NAD(+) redox state. The sequence is that of Redox-sensing transcriptional repressor Rex from Bacillus anthracis (strain A0248).